Reading from the N-terminus, the 335-residue chain is Taste receptor type 2 member 119 (335 aa).

Residues 1–7 (MMEGHML) lie on the Extracellular side of the membrane. A helical membrane pass occupies residues 8–28 (FFLLVVVVQFLTGVLANGLIV). At 29–43 (VVNAIDLIMWKKMAP) the chain is on the cytoplasmic side. The chain crosses the membrane as a helical span at residues 44–64 (LDLLLFCLATSRIILQLCILF). The Extracellular segment spans residues 65–81 (AQLGLSCLVRHTLFADN). An N-linked (GlcNAc...) asparagine glycan is attached at N81. The chain crosses the membrane as a helical span at residues 82–102 (VTFVYIINELSLWFATWLGVF). The Cytoplasmic segment spans residues 103–124 (YCAKIATIPHPLFLWLKMRISR). A helical transmembrane segment spans residues 125–145 (LVPWLILASVVYVTVTTFIHS). Residues 146–176 (RETSELPKQIFISFFSKNTTRVRPAHATLLS) are Extracellular-facing. A glycan (N-linked (GlcNAc...) asparagine) is linked at N163. Residues 177–197 (VFVFGLTLPFLIFTVAVLLLL) traverse the membrane as a helical segment. Residues 198–224 (SSLWNHSRQMRTMVGTREPSRHALVSA) are Cytoplasmic-facing. The chain crosses the membrane as a helical span at residues 225–245 (MLSILSFLILYLSHDMVAVLI). At 246-256 (CTQGLHFGSRT) the chain is on the extracellular side. A helical transmembrane segment spans residues 257–277 (FAFCLLVIGMYPSLHSIVLIL). Residues 278 to 335 (GNPKLKRNAKTFIVHCKCCHCARAWVTSRNPRLSDLPVPATHHSANKTSCSEACIMPS) lie on the Cytoplasmic side of the membrane.

Belongs to the G-protein coupled receptor T2R family. Expressed in subsets of taste receptor cells of the tongue and palate epithelium and exclusively in gustducin-positive cells. Expressed in 15% taste bud cells in circumvallate and foliate papillae but only in 2% in fungiform papillae. Expressed in the gastro and duodenal tissue. Not expressed in colon, liver, heart and kidney.

The protein localises to the membrane. Its function is as follows. Gustducin-coupled receptor implicated in the perception of bitter compounds in the oral cavity and the gastrointestinal tract. Signals through PLCB2 and the calcium-regulated cation channel TRPM5. The chain is Taste receptor type 2 member 119 (Tas2r119) from Mus musculus (Mouse).